A 437-amino-acid polypeptide reads, in one-letter code: GTPase Era, mitochondrial (437 aa).

Residues 1-43 (MAAPSWRGARLVQSVLRVWQVGPHVARERVIPFSSLLGFQRRC) constitute a mitochondrion transit peptide. Positions 112 to 330 (RVLRVVLLGA…QYLLTQAQPG (219 aa)) constitute an Era-type G domain. Residues 120–127 (GAPNAGKS) are G1. 120-127 (GAPNAGKS) lines the GTP pocket. The G2 stretch occupies residues 146-150 (HTTRC). A G3 region spans residues 167–170 (DTPG). Position 167-171 (167-171 (DTPGI)) interacts with GTP. Phosphoserine is present on Ser-173. GTP is bound at residue 236–239 (NKVD). Residues 236–239 (NKVD) form a G4 region. Residues 271-290 (HSHPGTHCPSPAVKDPNTQS) form a disordered region. The tract at residues 308–310 (LSA) is G5. In terms of domain architecture, KH type-2 spans 360 to 437 (LPQEVPYNVQ…DIRLSVKLLK (78 aa)).

It belongs to the TRAFAC class TrmE-Era-EngA-EngB-Septin-like GTPase superfamily. Era GTPase family.

It is found in the mitochondrion matrix. The protein resides in the mitochondrion inner membrane. Functionally, probable GTPase that plays a role in the mitochondrial ribosomal small subunit assembly. Specifically binds the 12S mitochondrial rRNA (12S mt-rRNA) to a 33 nucleotide section delineating the 3' terminal stem-loop region. May act as a chaperone that protects the 12S mt-rRNA on the 28S mitoribosomal subunit during ribosomal small subunit assembly. In Homo sapiens (Human), this protein is GTPase Era, mitochondrial (ERAL1).